A 1373-amino-acid chain; its full sequence is DNA-directed RNA polymerase subunit beta'' (1373 aa).

Residues Cys-224, Cys-296, Cys-303, and Cys-306 each contribute to the Zn(2+) site.

Belongs to the RNA polymerase beta' chain family. RpoC2 subfamily. As to quaternary structure, in plastids the minimal PEP RNA polymerase catalytic core is composed of four subunits: alpha, beta, beta', and beta''. When a (nuclear-encoded) sigma factor is associated with the core the holoenzyme is formed, which can initiate transcription. Zn(2+) is required as a cofactor.

The protein resides in the plastid. It localises to the chloroplast. The enzyme catalyses RNA(n) + a ribonucleoside 5'-triphosphate = RNA(n+1) + diphosphate. In terms of biological role, DNA-dependent RNA polymerase catalyzes the transcription of DNA into RNA using the four ribonucleoside triphosphates as substrates. In Amborella trichopoda, this protein is DNA-directed RNA polymerase subunit beta''.